Here is an 865-residue protein sequence, read N- to C-terminus: V-type proton ATPase 116 kDa subunit a 3 (865 aa).

The Cytoplasmic segment spans residues 1-409; the sequence is MGSIYRSEHM…VNPAPWTIIS (409 aa). Positions 51-121 form a coiled coil; that stretch reads FVNEVRRCDE…NKNCKVLKNN (71 aa). Residues 410–430 traverse the membrane as a helical segment; the sequence is FPFLFAVMFGDAGHGIIMLIA. The Extracellular portion of the chain corresponds to 431–453; the sequence is ASAFVIFEKKLISMKIKDEIFNT. Residues 454 to 474 traverse the membrane as a helical segment; sequence FFGGRYVVLLMGMFAIYTGFI. Residues 475-556 are Cytoplasmic-facing; that stretch reads YNDFYSKSVN…FLNPMKMKTS (82 aa). The helical transmembrane segment at 557–577 threads the bilayer; sequence ILLGISQMAFGIMLSLMNHIG. N-linked (GlcNAc...) asparagine glycosylation occurs at Asn-578. The Extracellular segment spans residues 578-583; the sequence is NRSVVD. The helical transmembrane segment at 584-604 threads the bilayer; it reads IVFVFIPQCLFLGCIFVYLCL. The Cytoplasmic portion of the chain corresponds to 605–623; the sequence is QVLMKWIFFYVKPAYIFGR. The helical transmembrane segment at 624–644 threads the bilayer; that stretch reads LYPGSNCAPSLLIGLINMFMV. Over 645–688 the chain is Extracellular; the sequence is KSRDASFAHDVGTAAGKEWVIVNGQNVTYTINDQCYLQQWYPNQ. Asn-670 and Asn-687 each carry an N-linked (GlcNAc...) asparagine glycan. A helical membrane pass occupies residues 689-709; sequence SLVELILLLIAVVSVPVMLLV. Residues 710–798 lie on the Cytoplasmic side of the membrane; that stretch reads KPFYIRWRHS…LTMGGWGGSA (89 aa). The helical transmembrane segment at 799–819 threads the bilayer; the sequence is AITILFYFIFSILSVCILILM. The Extracellular segment spans residues 820 to 865; the sequence is EGLSAFLHAIRLHWVEFQSKFYGGTGIQFEPFCFTKIIRVYEGLDQ.

The protein belongs to the V-ATPase 116 kDa subunit family. In terms of assembly, V-ATPase is a heteromultimeric enzyme made up of two complexes: the ATP-hydrolytic V1 complex and the proton translocation V0 complex. The V1 complex consists of three catalytic AB heterodimers that form a heterohexamer, three peripheral stalks each consisting of EG heterodimers, one central rotor including subunits D and F, and the regulatory subunits C and H. The proton translocation complex V0 consists of the proton transport subunit a, a ring of proteolipid subunits c9c'', rotary subunit d, subunits e and f, and the accessory subunits vah-19/Ac45 and vah-20/PRR. Interacts with V-type proton ATPase subunit C vha-11.

It localises to the apical cell membrane. Subunit of the V0 complex of vacuolar(H+)-ATPase (V-ATPase), a multisubunit enzyme composed of a peripheral complex (V1) that hydrolyzes ATP and a membrane integral complex (V0) that translocates protons. V-ATPase is responsible for acidifying and maintaining the pH of intracellular compartments and in some cell types, is targeted to the plasma membrane, where it is responsible for acidifying the extracellular environment. In the intestine, required for the rhythmic defecation behavior by promoting acidification in the gut lumen following defecation. Also, luminal acidification is required for nutrient uptake. In Caenorhabditis elegans, this protein is V-type proton ATPase 116 kDa subunit a 3.